We begin with the raw amino-acid sequence, 269 residues long: Diaminopimelate epimerase (269 aa).

Substrate contacts are provided by Asn15 and Asn66. The active-site Proton donor is the Cys75. Residues 76 to 77, Asn152, Asn185, and 203 to 204 each bind substrate; these read GN and ER. Cys212 (proton acceptor) is an active-site residue. Residue 213–214 coordinates substrate; it reads GT.

This sequence belongs to the diaminopimelate epimerase family. Homodimer.

It localises to the cytoplasm. It catalyses the reaction (2S,6S)-2,6-diaminopimelate = meso-2,6-diaminopimelate. It functions in the pathway amino-acid biosynthesis; L-lysine biosynthesis via DAP pathway; DL-2,6-diaminopimelate from LL-2,6-diaminopimelate: step 1/1. Catalyzes the stereoinversion of LL-2,6-diaminopimelate (L,L-DAP) to meso-diaminopimelate (meso-DAP), a precursor of L-lysine and an essential component of the bacterial peptidoglycan. The protein is Diaminopimelate epimerase of Parabacteroides distasonis (strain ATCC 8503 / DSM 20701 / CIP 104284 / JCM 5825 / NCTC 11152).